The sequence spans 154 residues: SsrA-binding protein (154 aa).

Positions 134–154 (KRQAIKERQTQREIQRELKER) are disordered.

Belongs to the SmpB family.

Its subcellular location is the cytoplasm. Functionally, required for rescue of stalled ribosomes mediated by trans-translation. Binds to transfer-messenger RNA (tmRNA), required for stable association of tmRNA with ribosomes. tmRNA and SmpB together mimic tRNA shape, replacing the anticodon stem-loop with SmpB. tmRNA is encoded by the ssrA gene; the 2 termini fold to resemble tRNA(Ala) and it encodes a 'tag peptide', a short internal open reading frame. During trans-translation Ala-aminoacylated tmRNA acts like a tRNA, entering the A-site of stalled ribosomes, displacing the stalled mRNA. The ribosome then switches to translate the ORF on the tmRNA; the nascent peptide is terminated with the 'tag peptide' encoded by the tmRNA and targeted for degradation. The ribosome is freed to recommence translation, which seems to be the essential function of trans-translation. The polypeptide is SsrA-binding protein (Synechococcus sp. (strain JA-2-3B'a(2-13)) (Cyanobacteria bacterium Yellowstone B-Prime)).